Consider the following 622-residue polypeptide: Intermediate filament protein ifc-2 (622 aa).

Positions 19–54 (SGTYASGFGQLVSGMSSAGAICTTQIRDAREREKRE) are head. The IF rod domain occupies 51 to 399 (EKREIGLLND…ILLNGANVTT (349 aa)). Residues 55 to 86 (IGLLNDRLADYIEKVRFLEAQNRCLSHDIDIL) form a coil 1A region. Residues 87–99 (RNGFSGGGHVSGL) form a linker 1 region. The coil 1B stretch occupies residues 100-237 (FDAEINQAKH…TENNVRIEQE (138 aa)). Residues 238–255 (LVFIRRDTTADNRDYFRH) are linker 12. A coil 2 region spans residues 256-399 (ELQAAIRDIR…ILLNGANVTT (144 aa)). The interval 400–550 (YTSNTHGSGS…RVDVGGFRIE (151 aa)) is tail. One can recognise an LTD domain in the interval 509–622 (SGRHFHSWYL…EERAWFVYLD (114 aa)).

This sequence belongs to the intermediate filament family. Expressed in intestinal cells and at desmosomes in intestine and pharynx of the larva.

It localises to the cytoplasm. In terms of biological role, cytoplasmic intermediate filaments provide mechanical strength to cells. Not essential protein, although its absence leads to mild defects in locomotion. This chain is Intermediate filament protein ifc-2 (ifc-2), found in Caenorhabditis elegans.